The sequence spans 63 residues: SPbeta prophage-derived uncharacterized protein YotC (63 aa).

The sequence is that of SPbeta prophage-derived uncharacterized protein YotC (yotC) from Bacillus subtilis (strain 168).